The sequence spans 339 residues: Phosphoribosylformylglycinamidine cyclo-ligase (339 aa).

Belongs to the AIR synthase family.

The protein localises to the cytoplasm. The catalysed reaction is 2-formamido-N(1)-(5-O-phospho-beta-D-ribosyl)acetamidine + ATP = 5-amino-1-(5-phospho-beta-D-ribosyl)imidazole + ADP + phosphate + H(+). The protein operates within purine metabolism; IMP biosynthesis via de novo pathway; 5-amino-1-(5-phospho-D-ribosyl)imidazole from N(2)-formyl-N(1)-(5-phospho-D-ribosyl)glycinamide: step 2/2. The chain is Phosphoribosylformylglycinamidine cyclo-ligase from Streptococcus thermophilus (strain ATCC BAA-250 / LMG 18311).